A 226-amino-acid polypeptide reads, in one-letter code: Cytidylate kinase (226 aa).

Position 11–19 (11–19 (GPASAGKST)) interacts with ATP.

This sequence belongs to the cytidylate kinase family. Type 1 subfamily.

It localises to the cytoplasm. The catalysed reaction is CMP + ATP = CDP + ADP. The enzyme catalyses dCMP + ATP = dCDP + ADP. In Pediococcus pentosaceus (strain ATCC 25745 / CCUG 21536 / LMG 10740 / 183-1w), this protein is Cytidylate kinase.